We begin with the raw amino-acid sequence, 393 residues long: Proteasome-activating nucleotidase (393 aa).

The stretch at serine 14–serine 53 forms a coiled coil. ATP contacts are provided by residues glycine 178 to methionine 183 and tyrosine 317. A docks into pockets in the proteasome alpha-ring to cause gate opening region spans residues lysine 391–serine 393.

Belongs to the AAA ATPase family. Homohexamer. The hexameric complex has a two-ring architecture resembling a top hat that caps the 20S proteasome core at one or both ends. Upon ATP-binding, the C-terminus of PAN interacts with the alpha-rings of the proteasome core by binding to the intersubunit pockets.

It is found in the cytoplasm. ATPase which is responsible for recognizing, binding, unfolding and translocation of substrate proteins into the archaeal 20S proteasome core particle. Is essential for opening the gate of the 20S proteasome via an interaction with its C-terminus, thereby allowing substrate entry and access to the site of proteolysis. Thus, the C-termini of the proteasomal ATPase function like a 'key in a lock' to induce gate opening and therefore regulate proteolysis. Unfolding activity requires energy from ATP hydrolysis, whereas ATP binding alone promotes ATPase-20S proteasome association which triggers gate opening, and supports translocation of unfolded substrates. In Saccharolobus islandicus (strain Y.N.15.51 / Yellowstone #2) (Sulfolobus islandicus), this protein is Proteasome-activating nucleotidase.